Reading from the N-terminus, the 706-residue chain is MKIFSESHKTVFVVDHCPYMAESCRQHVEFDMLVKNRTQGIIPLAPISKSLWTCSVESSMEYCRIMYDIFPFKKLVNFIVSDSGAHVLNSWTQEDQNLQELMAALAAVGPPNPRADPECCSILHGLVAAVETLCKITEYQHEARTLLMENAERVGNRGRIICITNAKSDSHVRMLEDCVQETIHEHNKLAANSDHLMQIQKCELVLIHTYPVGEDSLVSDRSKKELSPVLTSEVHSVRAGRHLATKLNILVQQHFDLASTTITNIPMKEEQHANTSANYDVELLHHKDAHVDFLKSGDSHLGGGSREGSFKETITLKWCTPRTNNIELHYCTGAYRISPVDVNSRPSSCLTNFLLNGRSVLLEQPRKSGSKVISHMLSSHGGEIFLHVLSSSRSILEDPPSISEGCGGRVTDYRITDFGEFMRENRLTPFLDPRYKIDGSLEVPLERAKDQLEKHTRYWPMIISQTTIFNMQAVVPLASVIVKESLTEEDVLNCQKTIYNLVDMERKNDPLPISTVGTRGKGPKRDEQYRIMWNELETLVRAHINNSEKHQRVLECLMACRSKPPEEEERKKRGRKREDKEDKSEKAVKDYEQEKSWQDSERLKGILERGKEELAEAEIIKDSPDSPEPPNKKPLVEMDETPQVEKSKGPVSLLSLWSNRINTANSRKHQEFAGRLNSVNNRAELYQHLKEENGMETTENGKASRQ.

The interval 564–603 (PPEEEERKKRGRKREDKEDKSEKAVKDYEQEKSWQDSERL) is disordered. Residues 567 to 622 (EEERKKRGRKREDKEDKSEKAVKDYEQEKSWQDSERLKGILERGKEELAEAEIIKD) adopt a coiled-coil conformation. The short motif at 572–582 (KRGRKREDKED) is the Nuclear localization signal (NLS) element. Residue lysine 611 forms a Glycyl lysine isopeptide (Lys-Gly) (interchain with G-Cter in SUMO2) linkage. Positions 615-636 (AEAEIIKDSPDSPEPPNKKPLV) are enriched in basic and acidic residues. Residues 615–650 (AEAEIIKDSPDSPEPPNKKPLVEMDETPQVEKSKGP) are disordered. Phosphoserine occurs at positions 623, 626, and 678. Positions 649–694 (GPVSLLSLWSNRINTANSRKHQEFAGRLNSVNNRAELYQHLKEENG) are cleavage module binding motif (CMBM).

This sequence belongs to the Integrator subunit 13 family. As to quaternary structure, component of the Integrator complex, composed of core subunits INTS1, INTS2, INTS3, INTS4, INTS5, INTS6, INTS7, INTS8, INTS9/RC74, INTS10, INTS11/CPSF3L, INTS12, INTS13, INTS14 and INTS15. The core complex associates with protein phosphatase 2A subunits PPP2CA and PPP2R1A, to form the Integrator-PP2A (INTAC) complex. INTS13 is part of the tail subcomplex, composed of INTS10, INTS13, INTS14 and INTS15. Interacts with transcription factors ZNF609 and ZNF655. Interacts with PAFAH1B1; this interaction may be required for proper recruitment of dynein complexes to the nuclear envelope at prophase. Widely expressed. Tends to be up-regulated in seminomas compared to normal testis.

The protein resides in the nucleus. It localises to the cytoplasm. Its function is as follows. Component of the integrator complex, a multiprotein complex that terminates RNA polymerase II (Pol II) transcription in the promoter-proximal region of genes. The integrator complex provides a quality checkpoint during transcription elongation by driving premature transcription termination of transcripts that are unfavorably configured for transcriptional elongation: the complex terminates transcription by (1) catalyzing dephosphorylation of the C-terminal domain (CTD) of Pol II subunit POLR2A/RPB1 and SUPT5H/SPT5, (2) degrading the exiting nascent RNA transcript via endonuclease activity and (3) promoting the release of Pol II from bound DNA. The integrator complex is also involved in terminating the synthesis of non-coding Pol II transcripts, such as enhancer RNAs (eRNAs), small nuclear RNAs (snRNAs), telomerase RNAs and long non-coding RNAs (lncRNAs). Within the integrator complex, INTS13 is part of the integrator tail module and acts as a platform for the recruitment of transcription factors at promoters. At prophase, mediates recruitment of cytoplasmic dynein to the nuclear envelope, a step important for proper centrosome-nucleus coupling. At G2/M phase, may be required for proper spindle formation and execution of cytokinesis. This is Integrator complex subunit 13 from Homo sapiens (Human).